The primary structure comprises 196 residues: Transmembrane protein 126A (196 aa).

At 1-34 (MESHKPSTSKDDLILNIISRKIKQLPESDRNLLE) the chain is on the mitochondrial matrix side. A helical membrane pass occupies residues 35-55 (YGSAYIGLNAAFGGLIANSLF). At 56–57 (RR) the chain is on the mitochondrial intermembrane side. The helical transmembrane segment at 58 to 78 (ILNVTQARLASSLPMAVIPFL) threads the bilayer. Residues 79-106 (TANLSYQSLVSLPLSTGDLNCETCTTTR) are Mitochondrial matrix-facing. A helical transmembrane segment spans residues 107–127 (GALVGLVMGGLYPILLAIPVN). The Mitochondrial intermembrane portion of the chain corresponds to 128–159 (GGLAARYESSPLPQRGNIFNYWITVSKPVFRK). Residues 160-176 (MLFPTLLQTVFASYLGS) traverse the membrane as a helical segment. Topologically, residues 177-196 (RQYKLLIKALQLPEPDLEIH) are mitochondrial matrix.

Belongs to the TMEM126 family. As to quaternary structure, interacts with OXA1L; promoting cotranslational quality control in mitochondria. In the retina, significant levels of expression are detected in the ganglion cell layer, the optic nerve head, the outer plexiform layer, and in the outer ellipsoide length of photoreceptor inner segments.

The protein localises to the mitochondrion inner membrane. In terms of biological role, protein required for the cotranslational protein quality control in the inner membrane of the mitochondria. Associates with newly synthesized polypeptides and may act as a chaperone that cooperates with OXA1L for the insertion of newly synthesized mitochondrial proteins into the inner membrane. Required for the assembly of the ND4 module of mitochondrial complex I. This Mus musculus (Mouse) protein is Transmembrane protein 126A.